Here is a 116-residue protein sequence, read N- to C-terminus: MAQSGVFLRNPGHLTSAPQAALLFSLVLTSFHLSCGTETSSSNSTLSAHHPDPGTLEQCANVDFCPLASLCCRASVDEYGWIAAAVGWSFWFLTLILLCVDKLMKLTPEEPKDLAA.

The first 35 residues, 1–35 (MAQSGVFLRNPGHLTSAPQAALLFSLVLTSFHLSC), serve as a signal peptide directing secretion. Topologically, residues 36-79 (GTETSSSNSTLSAHHPDPGTLEQCANVDFCPLASLCCRASVDEY) are extracellular. A helical transmembrane segment spans residues 80–100 (GWIAAAVGWSFWFLTLILLCV). Residues 101–116 (DKLMKLTPEEPKDLAA) lie on the Cytoplasmic side of the membrane.

It is found in the membrane. In Mus musculus (Mouse), this protein is Transmembrane protein 213 (Tmem213).